The following is a 270-amino-acid chain: Glutamate 5-kinase (270 aa).

Position 17 (lysine 17) interacts with ATP. Residues serine 57, aspartate 144, and asparagine 160 each coordinate substrate. Residues 180–181 (SD) and 222–228 (TGGMTSK) each bind ATP.

Belongs to the glutamate 5-kinase family.

The protein resides in the cytoplasm. It catalyses the reaction L-glutamate + ATP = L-glutamyl 5-phosphate + ADP. It functions in the pathway amino-acid biosynthesis; L-proline biosynthesis; L-glutamate 5-semialdehyde from L-glutamate: step 1/2. Its function is as follows. Catalyzes the transfer of a phosphate group to glutamate to form L-glutamate 5-phosphate. The chain is Glutamate 5-kinase from Lactococcus lactis subsp. lactis (strain IL1403) (Streptococcus lactis).